The primary structure comprises 60 residues: UPF0434 protein NMA0874 (60 aa).

This sequence belongs to the UPF0434 family.

The protein is UPF0434 protein NMA0874 of Neisseria meningitidis serogroup A / serotype 4A (strain DSM 15465 / Z2491).